The sequence spans 92 residues: UPF0473 protein OB2006 (92 aa).

The protein belongs to the UPF0473 family.

In Oceanobacillus iheyensis (strain DSM 14371 / CIP 107618 / JCM 11309 / KCTC 3954 / HTE831), this protein is UPF0473 protein OB2006.